Here is a 358-residue protein sequence, read N- to C-terminus: Magnesium-protoporphyrin IX monomethyl ester [oxidative] cyclase 2 (358 aa).

It belongs to the AcsF family. It depends on Fe cation as a cofactor.

It catalyses the reaction Mg-protoporphyrin IX 13-monomethyl ester + 3 NADPH + 3 O2 + 2 H(+) = 3,8-divinyl protochlorophyllide a + 3 NADP(+) + 5 H2O. Its pathway is porphyrin-containing compound metabolism; chlorophyll biosynthesis (light-independent). Functionally, catalyzes the formation of the isocyclic ring in chlorophyll biosynthesis. Mediates the cyclase reaction, which results in the formation of divinylprotochlorophyllide (Pchlide) characteristic of all chlorophylls from magnesium-protoporphyrin IX 13-monomethyl ester (MgPMME). The protein is Magnesium-protoporphyrin IX monomethyl ester [oxidative] cyclase 2 of Nostoc sp. (strain PCC 7120 / SAG 25.82 / UTEX 2576).